Here is a 720-residue protein sequence, read N- to C-terminus: Protein O-mannosyl-transferase 1 (720 aa).

8 helical membrane passes run 7–27 (PVSVTVEINVLLLAVTALALF), 67–87 (FGHMILALGAYLGGFDGNFVW), 105–125 (LIPALAGSFCVPLAYLVVVEL), 127–147 (YSHFSALGACALLLMENSLIV), 150–170 (RFMLLESVLIFFLLLAVLSYL), 178–198 (SFFKWFWLVICGVSCAFGIGV), 201–221 (MGMFTYFLLLSLAAVHTWQLI), and 239–259 (FLALVVLPVIMYLGFFYIHLT). MIR domains lie at 291-354 (PLDV…IKDP), 365-422 (PKPV…VDIV), and 426-486 (SEKE…VEEH). 4 consecutive transmembrane segments (helical) span residues 570 to 590 (IVTWTTGNITLVVYCLLFLTY), 609 to 629 (LVLAGVVCLGGWAVNYLPFFL), 633 to 653 (TLFLYHYLPALTFKILQIPIV), and 670 to 690 (AFGGVILAVLCSVYMSYHSLS).

This sequence belongs to the glycosyltransferase 39 family. As to expression, widely expressed. Has particularly strong expression in testis, ovary, brain, liver and heart.

It is found in the endoplasmic reticulum membrane. It carries out the reaction a di-trans,poly-cis-dolichyl beta-D-mannosyl phosphate + L-seryl-[protein] = 3-O-(alpha-D-mannosyl)-L-seryl-[protein] + a di-trans,poly-cis-dolichyl phosphate + H(+). The enzyme catalyses a di-trans,poly-cis-dolichyl beta-D-mannosyl phosphate + L-threonyl-[protein] = 3-O-(alpha-D-mannosyl)-L-threonyl-[protein] + a di-trans,poly-cis-dolichyl phosphate + H(+). It participates in protein modification; protein glycosylation. Functionally, transfers mannosyl residues to the hydroxyl group of serine or threonine residues. Coexpression of both POMT1 and POMT2 is necessary for enzyme activity, expression of either POMT1 or POMT2 alone is insufficient. The sequence is that of Protein O-mannosyl-transferase 1 from Danio rerio (Zebrafish).